The sequence spans 298 residues: FH protein interacting protein FIP2 (298 aa).

The BTB domain occupies 9 to 80 (SMVRLNIGGK…LRDGVIPSLS (72 aa)). 4 consecutive Pentapeptide repeat domains span residues 129-165 (ERVR…FFSR), 166-203 (TNLQ…GALL), 216-255 (ACLV…NLKG), and 256-295 (AKLS…NMTG).

In terms of assembly, interacts with FH1. As to expression, expressed in all tissues but preferentially in roots and flowers.

It functions in the pathway protein modification; protein ubiquitination. May act as a substrate-specific adapter of an E3 ubiquitin-protein ligase complex (CUL3-RBX1-BTB) which mediates the ubiquitination and subsequent proteasomal degradation of target proteins. The polypeptide is FH protein interacting protein FIP2 (FIP2) (Arabidopsis thaliana (Mouse-ear cress)).